The primary structure comprises 858 residues: Bifunctional uridylyltransferase/uridylyl-removing enzyme (858 aa).

Residues 1–324 are uridylyltransferase; it reads MSAHAAPSPE…PATSGITRVL (324 aa). The segment at 325-681 is uridylyl-removing; sequence SADRFVEKQG…ARPSPIGDAL (357 aa). In terms of domain architecture, HD spans 443–565; that stretch reads VDQHILMVLR…VGNERYLTAL (123 aa). ACT domains lie at 682–763 and 790–858; these read QVLV…PSKG and ILSV…AIAV.

It belongs to the GlnD family. Requires Mg(2+) as cofactor.

The enzyme catalyses [protein-PII]-L-tyrosine + UTP = [protein-PII]-uridylyl-L-tyrosine + diphosphate. The catalysed reaction is [protein-PII]-uridylyl-L-tyrosine + H2O = [protein-PII]-L-tyrosine + UMP + H(+). Uridylyltransferase (UTase) activity is inhibited by glutamine, while glutamine activates uridylyl-removing (UR) activity. Functionally, modifies, by uridylylation and deuridylylation, the PII regulatory proteins (GlnB and homologs), in response to the nitrogen status of the cell that GlnD senses through the glutamine level. Under low glutamine levels, catalyzes the conversion of the PII proteins and UTP to PII-UMP and PPi, while under higher glutamine levels, GlnD hydrolyzes PII-UMP to PII and UMP (deuridylylation). Thus, controls uridylylation state and activity of the PII proteins, and plays an important role in the regulation of nitrogen assimilation and metabolism. The chain is Bifunctional uridylyltransferase/uridylyl-removing enzyme from Burkholderia orbicola (strain AU 1054).